Here is a 567-residue protein sequence, read N- to C-terminus: Urease subunit alpha (567 aa).

One can recognise a Urease domain in the interval 129-567; it reads GGVDTHIHWI…LPMAQRYFLF (439 aa). Residues His-134, His-136, and Lys-217 each coordinate Ni(2+). An N6-carboxylysine modification is found at Lys-217. Position 219 (His-219) interacts with substrate. Ni(2+) is bound by residues His-246 and His-272. The active-site Proton donor is the His-320. Ni(2+) is bound at residue Asp-360.

It belongs to the metallo-dependent hydrolases superfamily. Urease alpha subunit family. Heterotrimer of UreA (gamma), UreB (beta) and UreC (alpha) subunits. Three heterotrimers associate to form the active enzyme. Ni cation is required as a cofactor. Post-translationally, carboxylation allows a single lysine to coordinate two nickel ions.

It is found in the cytoplasm. The enzyme catalyses urea + 2 H2O + H(+) = hydrogencarbonate + 2 NH4(+). It functions in the pathway nitrogen metabolism; urea degradation; CO(2) and NH(3) from urea (urease route): step 1/1. In Citrobacter koseri (strain ATCC BAA-895 / CDC 4225-83 / SGSC4696), this protein is Urease subunit alpha.